We begin with the raw amino-acid sequence, 357 residues long: Protein BMRF2 (357 aa).

Topologically, residues 1 to 11 (MFSCKQHLSLG) are virion surface. At 12–32 (ACVFCLGLLASTPFIWCFVFA) the chain is embedded in the membrane. The Intravirion segment spans residues 33 to 46 (NLLSLEIFSPWQTH). The hydrophobic stretch at 47–67 (VYRLGFPTACLMAVLWTLVPA) threads the membrane. The Virion surface segment spans residues 68–70 (KHA). The hydrophobic stretch at 71–91 (VRAVTPAIMLNIASALIFFSL) threads the membrane. Topologically, residues 92 to 98 (RVYSTST) are intravirion. The hydrophobic stretch at 99–121 (WVSAPCLFLANLPLLCLWPRLAI) threads the membrane. At 122-133 (EIVYICPAIHQR) the chain is on the virion surface side. Over 134–154 (FFELGLLLACTIFALSVVSRA) the chain traverses the membrane. Residues 155 to 158 (LEVS) are Intravirion-facing. At 159-179 (AVFMSPFFIFLALGSGSLAGA) the chain is embedded in the membrane. At 180–217 (RRNQIYTSGLERRRSIFCARGDHSVASLKETLHKCPWD) the chain is on the virion surface side. An Integrin binding site motif is present at residues 199–201 (RGD). At 218–238 (LLAISALTVLVVCVMIVLHVH) the chain is embedded in the membrane. Over 239–240 (AE) the chain is Intravirion. Over 241-261 (VFFGLSRYLPLFLCGAMASGG) the chain traverses the membrane. Over 262–267 (LYLGHS) the chain is Virion surface. A membrane pass occupies residues 268–288 (SIIACVMATLCTLSSVVVYFL). Residues 289-298 (HETLGPLGKT) are Intravirion-facing. A transmembrane span lies at residues 299-319 (VLFISIFVYYFSGVAALSAAM). Residues 320-335 (RYKLKKFVNGPLVHLR) lie on the Virion surface side of the membrane. Over 336–356 (VVYMCCFVFTFCEYLLVTFIK) the chain traverses the membrane. Residue Ser357 is a topological domain, intravirion.

It belongs to the herpesviridae BMRF2 family. Interacts with BDLF2. Interacts with host beta1 integrin family. In terms of processing, extensively glycosylated by O-linked oligosaccharides.

It localises to the virion membrane. The protein localises to the host cell membrane. Functionally, facilitates virus attachment to oral epithelial cells by binding to host beta1 integrin family. Participates in rearrangement of cellular actin to increase intercellular contacts by binding BDLF2 and thereby promote virus cell-to-cell spreading. The polypeptide is Protein BMRF2 (Homo sapiens (Human)).